Here is a 184-residue protein sequence, read N- to C-terminus: Fruit protein pKIWI501 (184 aa).

The tract at residues 1–184 is disordered; that stretch reads MATVEVTPAV…TEVPVDKTEE (184 aa). Composition is skewed to low complexity over residues 25-36 and 53-65; these read PQEPQPEAAVAA and PEAV…PAAT. The segment covering 72–92 has biased composition (acidic residues); that stretch reads EVAEAEEEVVEEPQEVPEEPV. Positions 96-119 are enriched in basic and acidic residues; the sequence is AAKEVEATEGKAEPTGEMKDKTPE. Residues 120-156 show a composition bias toward low complexity; it reads ATDAPEAPAAAEEPTDAPEAPAVAEEPTNAPEAPAVG. A compositionally biased stretch (basic and acidic residues) spans 159 to 168; the sequence is PEAKEGKPDE.

It to H.brasiliensis latex allergen Hev b 5.

This chain is Fruit protein pKIWI501, found in Actinidia deliciosa (Kiwi).